The chain runs to 336 residues: Corrinoid adenosyltransferase PduO (336 aa).

Residues methionine 1 to leucine 185 are pduON. The tract at residues lysine 194–glutamine 336 is pduOC. Histidine 207 serves as a coordination point for heme. Mg(2+)-binding residues include glutamate 215 and glutamine 218.

Belongs to the Cob(I)alamin adenosyltransferase family. PduO subfamily. In terms of assembly, the C-terminal domain (PduOC) forms stable octamers and also crystallizes as an octamer. Forms a complex with PduS. The cofactor is heme b. Mg(2+) is required as a cofactor.

The protein resides in the bacterial microcompartment. The enzyme catalyses cob(I)alamin-[corrinoid adenosyltransferase] + ATP = apo-[corrinoid adenosyltransferase] + adenosylcob(III)alamin + triphosphate. Its pathway is polyol metabolism; 1,2-propanediol degradation. It functions in the pathway cofactor biosynthesis; adenosylcobalamin biosynthesis. With respect to regulation, inhibited by ADP but not significantly by other nucleotides, inhibited by diphosphate and less well by triphosphate. Converts cob(I)alamin to adenosylcobalamin (adenosylcob(III)alamin), the cofactor for propanediol dehydratase. Found in the bacterial microcompartment (BMC) dedicated to 1,2-propanediol (1,2-PD) degradation. For adenosylcobalamin synthesis dATP can replace ATP, but no other nucleotides will substitute. PduS and PduO allow regeneration of the adenosylcobalamin cofactor within the BMC. Functionally, the 1,2-PD-specific bacterial microcompartment (BMC) concentrates low levels of 1,2-PD catabolic enzymes, concentrates volatile reaction intermediates thus enhancing pathway flux and keeps the level of toxic, mutagenic propionaldehyde low. The chain is Corrinoid adenosyltransferase PduO from Salmonella typhimurium (strain LT2 / SGSC1412 / ATCC 700720).